The following is a 157-amino-acid chain: Regulator of Ty1 transposition protein 102 (157 aa).

Position 77 is a phosphoserine (S77). Residues 95-157 (SLMTSHTKGD…TKESKDVKMN (63 aa)) form a disordered region. The span at 96–116 (LMTSHTKGDTSKATGAPSANQ) shows a compositional bias: polar residues. The residue at position 122 (S122) is a Phosphoserine. A compositionally biased stretch (basic and acidic residues) spans 147 to 157 (NTKESKDVKMN).

Interacts with STH1 and SWI3. Component of the two forms of the RSC complex composed of at least either RSC1 or RSC2, and ARP7, ARP9, LDB7, NPL6, RSC3, RSC30, RSC4, RSC58, RSC6, RSC8, RSC9, SFH1, STH1, HTL1 and probably RTT102. The complexes interact with histone and histone variant components of centromeric chromatin. Probable additional component of the SWI/SNF global transcription activator complex. The 1.14 MDa SWI/SNF complex is composed of 11 different subunits: one copy each of SWI1, SNF2/SWI2, SNF5, SNF12/SWP73, ARP7/SWP61, ARP9/SWP59; two copies each of SWI3, SNF6, SNF11, SWP82; and three copies of TAF14/SWP29.

It is found in the nucleus. Probable component of the chromatin structure-remodeling complex (RSC) which is involved in transcription regulation and nucleosome positioning. RSC is responsible for the transfer of a histone octamer from a nucleosome core particle to naked DNA. The reaction requires ATP and involves an activated RSC-nucleosome intermediate. Remodeling reaction also involves DNA translocation, DNA twist and conformational change. As a reconfigurer of centromeric and flanking nucleosomes, RSC complex is required both for proper kinetochore function in chromosome segregation and, via a PKC1-dependent signaling pathway, for organization of the cellular cytoskeleton. Probable component of the SWI/SNF complex, an ATP-dependent chromatin-remodeling complex, is required for the positive and negative regulation of gene expression of a large number of genes. It changes chromatin structure by altering DNA-histone contacts within a nucleosome, leading eventually to a change in nucleosome position, thus facilitating or repressing binding of gene-specific transcription factors. In Saccharomyces cerevisiae (strain ATCC 204508 / S288c) (Baker's yeast), this protein is Regulator of Ty1 transposition protein 102 (RTT102).